We begin with the raw amino-acid sequence, 587 residues long: Calcium/calmodulin-dependent protein kinase kinase 2 (587 aa).

Polar residues predominate over residues 1-11; sequence MSSCVSSQPTS. 2 disordered regions span residues 1–32 and 74–115; these read MSSCVSSQPTSDRAAPQDELGSGGVSRESQKP and EADG…SSLD. An N-acetylserine modification is found at S2. Phosphoserine is present on residues S99, S113, S128, S132, and S136. Residues 101-115 are compositionally biased toward polar residues; that stretch reads QERSQGGPASSSSLD. The Protein kinase domain occupies 164–445; that stretch reads YTLKDEIGKG…VPEIKLHPWV (282 aa). ATP-binding positions include 170–178 and K193; that span reads IGKGSYGVV. Residues 203–225 are RP domain; the sequence is QAGFPRRPPPRGTRPAPGGCIQP. The disordered stretch occupies residues 204 to 224; that stretch reads AGFPRRPPPRGTRPAPGGCIQ. The active-site Proton acceptor is the D311. Residues 471–476 are autoinhibitory domain; it reads ENSVKH. The calmodulin-binding stretch occupies residues 474–499; it reads VKHIPSLATVILVKTMIRKRSFGNPF. A phosphoserine mark is found at S494 and S510. The disordered stretch occupies residues 496–587; the sequence is GNPFEGSRRE…QQPEEAMEPE (92 aa). A compositionally biased stretch (basic and acidic residues) spans 520–535; it reads PTREWEPLSEPKEARQ. Positions 569–579 are enriched in pro residues; sequence PGSPPRTPPQQ. S571 carries the post-translational modification Phosphoserine.

It belongs to the protein kinase superfamily. Ser/Thr protein kinase family. As to quaternary structure, interacts with calmodulin. Post-translationally, phosphorylated by PKA. Each isoform may show a different pattern of phosphorylation. Autophosphorylated. In terms of tissue distribution, mainly expressed in brain, but detected in all tissues tested (at protein level). In the brain, isoform 1 may be predominant. with high levels in the cerebellum and hippocampus, although isoform 3 is detectable. Isoform 3 is also expressed in lung.

The protein resides in the nucleus. It is found in the cytoplasm. It localises to the cell projection. Its subcellular location is the neuron projection. The catalysed reaction is L-seryl-[protein] + ATP = O-phospho-L-seryl-[protein] + ADP + H(+). The enzyme catalyses L-threonyl-[protein] + ATP = O-phospho-L-threonyl-[protein] + ADP + H(+). Activated by Ca(2+)/calmodulin. Binding of calmodulin may relieve intrasteric autoinhibition. Autophosphorylation does not alter activity or regulation by Ca(2+)/calmodulin. In part, activity is independent on Ca(2+)/calmodulin. In terms of biological role, calcium/calmodulin-dependent protein kinase belonging to a proposed calcium-triggered signaling cascade involved in a number of cellular processes. Phosphorylates CAMK1 and CAMK4. Phosphorylates CAMK1D. Seems to be involved in hippocampal activation of CREB1. Efficiently phosphorylates 5'-AMP-activated protein kinase (AMPK) trimer, including that consisting of PRKAA1, PRKAB1 and PRKAG1. This phosphorylation is stimulated in response to Ca(2+) signals. May play a role in neurite growth. Isoform 2 may promote neurite elongation, while isoform 1 may promoter neurite branching. This is Calcium/calmodulin-dependent protein kinase kinase 2 (Camkk2) from Rattus norvegicus (Rat).